Consider the following 423-residue polypeptide: UDP-N-acetylglucosamine 1-carboxyvinyltransferase (423 aa).

22 to 23 is a phosphoenolpyruvate binding site; sequence KN. Arg-93 serves as a coordination point for UDP-N-acetyl-alpha-D-glucosamine. Catalysis depends on Cys-117, which acts as the Proton donor. Position 117 is a 2-(S-cysteinyl)pyruvic acid O-phosphothioketal (Cys-117). Residues 122-126, Asp-307, and Val-329 each bind UDP-N-acetyl-alpha-D-glucosamine; that span reads RPIDL.

It belongs to the EPSP synthase family. MurA subfamily.

The protein localises to the cytoplasm. It catalyses the reaction phosphoenolpyruvate + UDP-N-acetyl-alpha-D-glucosamine = UDP-N-acetyl-3-O-(1-carboxyvinyl)-alpha-D-glucosamine + phosphate. It participates in cell wall biogenesis; peptidoglycan biosynthesis. Functionally, cell wall formation. Adds enolpyruvyl to UDP-N-acetylglucosamine. The chain is UDP-N-acetylglucosamine 1-carboxyvinyltransferase from Chlorobium chlorochromatii (strain CaD3).